The primary structure comprises 341 residues: Tetraacyldisaccharide 4'-kinase (341 aa).

54–61 (TVGGAGKT) serves as a coordination point for ATP.

It belongs to the LpxK family.

It carries out the reaction a lipid A disaccharide + ATP = a lipid IVA + ADP + H(+). Its pathway is glycolipid biosynthesis; lipid IV(A) biosynthesis; lipid IV(A) from (3R)-3-hydroxytetradecanoyl-[acyl-carrier-protein] and UDP-N-acetyl-alpha-D-glucosamine: step 6/6. Functionally, transfers the gamma-phosphate of ATP to the 4'-position of a tetraacyldisaccharide 1-phosphate intermediate (termed DS-1-P) to form tetraacyldisaccharide 1,4'-bis-phosphate (lipid IVA). The chain is Tetraacyldisaccharide 4'-kinase from Brucella melitensis biotype 2 (strain ATCC 23457).